The chain runs to 315 residues: HVA22-like protein h (315 aa).

The tract at residues 148 to 315 (PKPKPKEKKQ…RKARSAGAPR (168 aa)) is disordered. Residues 173–190 (ATSQAASSNPQVRLQSKK) show a composition bias toward polar residues. Over residues 234 to 248 (PPGPPPPPPPPPPSP) the composition is skewed to pro residues.

It belongs to the DP1 family.

This is HVA22-like protein h (HVA22H) from Arabidopsis thaliana (Mouse-ear cress).